Consider the following 315-residue polypeptide: MYFQRTLKSDLSCQSVGLHSGRKVNMRIRPASSDEGIILVRTDTRYRQMIRVCLENVTDTTLATTIGSSGAAISTVEHILSALSGMGVDNAIIEVDAPEIPIMDGSALPFVNMLKLVGIRTQEKLKKYLVVKKPVSVSEGESFAMLAPSSSFEITYKIEFDHPLIKEQSYHLKLSDETYEKEICSSRTFGFLKDVEYLQAKGLALGGSLKNAVILDEKRIINKEGLRSHNEFVKHKILDAIGDLSLIGMPIVGHFIAYKSGHKLNSMLVKALLEQQENWTTASFLNCQDAHGQNTREKFSIRDIPARKILGAIHA.

The Zn(2+) site is built by histidine 78, histidine 235, and aspartate 239. Histidine 262 acts as the Proton donor in catalysis.

The protein belongs to the LpxC family. It depends on Zn(2+) as a cofactor.

It catalyses the reaction a UDP-3-O-[(3R)-3-hydroxyacyl]-N-acetyl-alpha-D-glucosamine + H2O = a UDP-3-O-[(3R)-3-hydroxyacyl]-alpha-D-glucosamine + acetate. It participates in glycolipid biosynthesis; lipid IV(A) biosynthesis; lipid IV(A) from (3R)-3-hydroxytetradecanoyl-[acyl-carrier-protein] and UDP-N-acetyl-alpha-D-glucosamine: step 2/6. Functionally, catalyzes the hydrolysis of UDP-3-O-myristoyl-N-acetylglucosamine to form UDP-3-O-myristoylglucosamine and acetate, the committed step in lipid A biosynthesis. The protein is UDP-3-O-acyl-N-acetylglucosamine deacetylase of Syntrophus aciditrophicus (strain SB).